A 129-amino-acid polypeptide reads, in one-letter code: Small ribosomal subunit protein uS11 (129 aa).

The protein belongs to the universal ribosomal protein uS11 family. In terms of assembly, part of the 30S ribosomal subunit. Interacts with proteins S7 and S18. Binds to IF-3.

Functionally, located on the platform of the 30S subunit, it bridges several disparate RNA helices of the 16S rRNA. Forms part of the Shine-Dalgarno cleft in the 70S ribosome. This is Small ribosomal subunit protein uS11 from Anoxybacillus flavithermus (strain DSM 21510 / WK1).